The following is a 242-amino-acid chain: Sugar fermentation stimulation protein homolog (242 aa).

It belongs to the SfsA family.

The protein is Sugar fermentation stimulation protein homolog of Enterococcus mundtii.